The sequence spans 484 residues: Pheophytinase, chloroplastic (484 aa).

Residues 1 to 47 constitute a chloroplast transit peptide; sequence MEIISLNVVPQCSVVTWSSKLATKRLVPNRSSLLFSGVKKSRLVIRS.

It belongs to the AB hydrolase superfamily. Interacts with HCAR, RCCR, PAO and the LHCII complex. Part of a SGR1-CCE-LHCII complex, which acts in chlorophyll breakdown.

Its subcellular location is the plastid. It localises to the chloroplast thylakoid membrane. It is found in the chloroplast stroma. Functionally, alpha/beta hydrolase dephytylating specifically the Mg-free chlorophyll pigment (pheophytin), yielding pheophorbide. No activity on chlorophyll. Belongs to the chlorophyll catabolic enzymes (CCEs). The protein is Pheophytinase, chloroplastic (PPH) of Arabidopsis thaliana (Mouse-ear cress).